Reading from the N-terminus, the 545-residue chain is Glucose-6-phosphate isomerase (545 aa).

The active-site Proton donor is Glu353. Active-site residues include His384 and Lys510.

This sequence belongs to the GPI family.

It localises to the cytoplasm. The enzyme catalyses alpha-D-glucose 6-phosphate = beta-D-fructose 6-phosphate. It participates in carbohydrate biosynthesis; gluconeogenesis. Its pathway is carbohydrate degradation; glycolysis; D-glyceraldehyde 3-phosphate and glycerone phosphate from D-glucose: step 2/4. In terms of biological role, catalyzes the reversible isomerization of glucose-6-phosphate to fructose-6-phosphate. The chain is Glucose-6-phosphate isomerase from Aromatoleum aromaticum (strain DSM 19018 / LMG 30748 / EbN1) (Azoarcus sp. (strain EbN1)).